The sequence spans 371 residues: MNRGHRHGASSGCLGTMEVKSKFGAEFRRFSLERSKPGKFEEFYGLLQHVHKIPNVDVLVGYADIHGDLLPINNDDNYHKAVSTANPLLRIFIQKKEEADYSAFGTDTLIRKKNMLSNVLRPDNHRKKPHIVISMPQDFRPVSSIIDVDILPETHRRVRLYKYGTEKPLGFYIRDGSSVRVTPHGLEKVPGIFISRLVPGGLAQSTGLLAVNDEVLEVNGIEVSGKSLDQVTDMMIANSRNLIITVRPANQRNNVVRNSRTSGSSSQSTDNSLLGFPQQVEASFEPEDQDSDEDDIIIEDSGEPQQIPKATPAQSLESLTQIELSFESGQNGFSPPQDTSLVPVPGSLDTELESRAPDQKLLEEDGTIITL.

A phosphoserine mark is found at Ser-10 and Ser-11. The 81-residue stretch at 16 to 96 (TMEVKSKFGA…PLLRIFIQKK (81 aa)) folds into the PB1 domain. The interaction with PARD3 and CDC42 stretch occupies residues 126 to 253 (RKKPHIVISM…ITVRPANQRN (128 aa)). The 18-residue stretch at 133–150 (ISMPQDFRPVSSIIDVDI) folds into the Pseudo-CRIB domain. Positions 157–250 (RVRLYKYGTE…NLIITVRPAN (94 aa)) constitute a PDZ domain. 2 disordered regions span residues 253-273 (NNVV…DNSL) and 326-371 (FESG…IITL). The span at 326 to 340 (FESGQNGFSPPQDTS) shows a compositional bias: polar residues. A compositionally biased stretch (basic and acidic residues) spans 352–363 (LESRAPDQKLLE).

Belongs to the PAR6 family. In terms of assembly, interacts with PARD3. Interacts with GTP-bound forms of CDC42, RHOQ/TC10 and RAC1. Interacts with the N-terminal part of PRKCI and PRKCZ. Part of a complex with PARD3, CDC42 or RAC1 and PRKCI or PRKCZ. Part of a complex with LLGL1 and PRKCI. Interacts with ALS2CR19. Interacts with ECT2. Interacts with PALS1. In terms of tissue distribution, expressed in pancreas and in both adult and fetal kidney. Weakly expressed in placenta and lung. Not expressed in other tissues.

Its subcellular location is the cytoplasm. The protein localises to the cell membrane. The protein resides in the cell junction. It localises to the tight junction. Adapter protein involved in asymmetrical cell division and cell polarization processes. Probably involved in formation of epithelial tight junctions. Association with PARD3 may prevent the interaction of PARD3 with F11R/JAM1, thereby preventing tight junction assembly. The PARD6-PARD3 complex links GTP-bound Rho small GTPases to atypical protein kinase C proteins. This Mus musculus (Mouse) protein is Partitioning defective 6 homolog beta (Pard6b).